A 351-amino-acid polypeptide reads, in one-letter code: Ribonucleoside-diphosphate reductase subunit M2 B (351 aa).

Positions 1 to 31 (MGDPERPEAAGLDQDERSSSDTNENEIKSNE) are disordered. Asp100, Glu131, and His134 together coordinate Fe cation. Residue Tyr138 is part of the active site. Residues Glu194, Glu228, and His231 each contribute to the Fe cation site.

Belongs to the ribonucleoside diphosphate reductase small chain family. Heterotetramer with large (RRM1) subunit. Interacts with p53/TP53. Interacts with RRM1 in response to DNA damage. Fe cation is required as a cofactor.

Its subcellular location is the cytoplasm. The protein localises to the nucleus. The catalysed reaction is a 2'-deoxyribonucleoside 5'-diphosphate + [thioredoxin]-disulfide + H2O = a ribonucleoside 5'-diphosphate + [thioredoxin]-dithiol. Functionally, plays a pivotal role in cell survival by repairing damaged DNA in a p53/TP53-dependent manner. Supplies deoxyribonucleotides for DNA repair in cells arrested at G1 or G2. Contains an iron-tyrosyl free radical center required for catalysis. Forms an active ribonucleotide reductase (RNR) complex with RRM1 which is expressed both in resting and proliferating cells in response to DNA damage. The polypeptide is Ribonucleoside-diphosphate reductase subunit M2 B (RRM2B) (Pongo abelii (Sumatran orangutan)).